The chain runs to 160 residues: Cytochrome b6-f complex subunit 4 (160 aa).

A run of 3 helical transmembrane segments spans residues 36–56, 95–115, and 131–151; these read LLYM…GLAV, LLGV…PFIE, and TIFL…TLPI.

Belongs to the cytochrome b family. PetD subfamily. The 4 large subunits of the cytochrome b6-f complex are cytochrome b6, subunit IV (17 kDa polypeptide, petD), cytochrome f and the Rieske protein, while the 4 small subunits are petG, petL, petM and petN. The complex functions as a dimer.

The protein resides in the plastid. It localises to the chloroplast thylakoid membrane. Functionally, component of the cytochrome b6-f complex, which mediates electron transfer between photosystem II (PSII) and photosystem I (PSI), cyclic electron flow around PSI, and state transitions. This is Cytochrome b6-f complex subunit 4 from Staurastrum punctulatum (Green alga).